Reading from the N-terminus, the 369-residue chain is Glutamate 5-kinase (369 aa).

K9 is a binding site for ATP. 3 residues coordinate substrate: S49, D136, and N148. ATP contacts are provided by residues 168–169 and 210–216; these read TD and TGGMLTK. Residues 275–355 enclose the PUA domain; that stretch reads RGGVYVDEGA…KGVFIHRDDW (81 aa).

Belongs to the glutamate 5-kinase family.

It is found in the cytoplasm. It carries out the reaction L-glutamate + ATP = L-glutamyl 5-phosphate + ADP. The protein operates within amino-acid biosynthesis; L-proline biosynthesis; L-glutamate 5-semialdehyde from L-glutamate: step 1/2. In terms of biological role, catalyzes the transfer of a phosphate group to glutamate to form L-glutamate 5-phosphate. This is Glutamate 5-kinase from Neisseria meningitidis serogroup A / serotype 4A (strain DSM 15465 / Z2491).